Here is a 462-residue protein sequence, read N- to C-terminus: Cysteine--tRNA ligase (462 aa).

Position 27 (C27) interacts with Zn(2+). Positions 29–39 match the 'HIGH' region motif; that stretch reads PTVYDLAHIGN. Residues C211, H236, and E240 each coordinate Zn(2+). Residues 270–274 carry the 'KMSKS' region motif; sequence KMSKS. K273 contacts ATP.

It belongs to the class-I aminoacyl-tRNA synthetase family. Monomer. It depends on Zn(2+) as a cofactor.

The protein localises to the cytoplasm. The enzyme catalyses tRNA(Cys) + L-cysteine + ATP = L-cysteinyl-tRNA(Cys) + AMP + diphosphate. This Anaplasma phagocytophilum (strain HZ) protein is Cysteine--tRNA ligase.